The following is a 181-amino-acid chain: ATP synthase subunit delta (181 aa).

It belongs to the ATPase delta chain family. F-type ATPases have 2 components, F(1) - the catalytic core - and F(0) - the membrane proton channel. F(1) has five subunits: alpha(3), beta(3), gamma(1), delta(1), epsilon(1). F(0) has three main subunits: a(1), b(2) and c(10-14). The alpha and beta chains form an alternating ring which encloses part of the gamma chain. F(1) is attached to F(0) by a central stalk formed by the gamma and epsilon chains, while a peripheral stalk is formed by the delta and b chains.

It is found in the cell inner membrane. F(1)F(0) ATP synthase produces ATP from ADP in the presence of a proton or sodium gradient. F-type ATPases consist of two structural domains, F(1) containing the extramembraneous catalytic core and F(0) containing the membrane proton channel, linked together by a central stalk and a peripheral stalk. During catalysis, ATP synthesis in the catalytic domain of F(1) is coupled via a rotary mechanism of the central stalk subunits to proton translocation. Functionally, this protein is part of the stalk that links CF(0) to CF(1). It either transmits conformational changes from CF(0) to CF(1) or is implicated in proton conduction. This Syntrophus aciditrophicus (strain SB) protein is ATP synthase subunit delta.